The following is a 326-amino-acid chain: Pyruvate dehydrogenase E1 component subunit alpha (326 aa).

Heterodimer of an alpha and a beta chain. Thiamine diphosphate serves as cofactor.

It carries out the reaction N(6)-[(R)-lipoyl]-L-lysyl-[protein] + pyruvate + H(+) = N(6)-[(R)-S(8)-acetyldihydrolipoyl]-L-lysyl-[protein] + CO2. The pyruvate dehydrogenase complex catalyzes the overall conversion of pyruvate to acetyl-CoA and CO(2). It contains multiple copies of three enzymatic components: pyruvate dehydrogenase (E1), dihydrolipoamide acetyltransferase (E2) and lipoamide dehydrogenase (E3). The protein is Pyruvate dehydrogenase E1 component subunit alpha (pdhA) of Rickettsia prowazekii (strain Madrid E).